The primary structure comprises 144 residues: Antigenic protein SchS21 (144 aa).

N-linked (GlcNAc...) asparagine glycosylation occurs at asparagine 36. The interval 91 to 105 (VKQMWPAESRKPMSG) is igE-binding epitope.

Homodimer. Requires Mg(2+) as cofactor.

Its subcellular location is the secreted. Has exodeoxyribonuclease activity with lambda-DNA and salmon testes dsDNA. No activity with circular plasmid DNA. The physiological role of this enzyme may be to degrade environmental DNA, and thus mobilize nitrogen for uptake. This chain is Antigenic protein SchS21, found in Stachybotrys chartarum (Toxic black mold).